The chain runs to 310 residues: MALRRPPRLRLCARLPDFFLLLLFRGCLIGAVNLKSSNRTPVVQEFESVELSCIITDSQTSDPRIEWKKIQDEQTTYVFFDNKIQGDLAGRAEILGKTSLKIWNVTRRDSALYRCEVVARNDRKEIDEIVIELTVQVKPVTPVCRVPKAVPVGKMATLHCQESEGHPRPHYSWYRNDVPLPTDSRANPRFRNSSFHLNSETGTLVFTAVHKDDSGQYYCIASNDAGSARCEEQEMEVYDLNIGGIIGGVLVVLAVLALITLGICCAYRRGYFINNKQDGESYKNPGKPDGVNYIRTDEEGDFRHKSSFVI.

A signal peptide spans 1 to 31; it reads MALRRPPRLRLCARLPDFFLLLLFRGCLIGA. Residues 32–241 are Extracellular-facing; it reads VNLKSSNRTP…EQEMEVYDLN (210 aa). Residues 35 to 127 enclose the Ig-like V-type domain; that stretch reads KSSNRTPVVQ…VARNDRKEID (93 aa). 2 cysteine pairs are disulfide-bonded: Cys53–Cys115 and Cys160–Cys219. N-linked (GlcNAc...) asparagine glycosylation is found at Asn104 and Asn192. Positions 139–236 constitute an Ig-like C2-type domain; sequence PVTPVCRVPK…SARCEEQEME (98 aa). A helical membrane pass occupies residues 242–262; the sequence is IGGIIGGVLVVLAVLALITLG. The Cytoplasmic segment spans residues 263–310; that stretch reads ICCAYRRGYFINNKQDGESYKNPGKPDGVNYIRTDEEGDFRHKSSFVI. Residues Cys264 and Cys265 are each lipidated (S-palmitoyl cysteine).

Belongs to the immunoglobulin superfamily. As to quaternary structure, interacts with ITGAM. Interacts with GORASP2. In terms of processing, proteolytically cleaved from endothelial cells surface into a soluble form by ADAM10 and ADAM17; the release of soluble JAM3 is increased by pro-inflammatory factors. Post-translationally, S-palmitoylated by ZDHHC7. S-palmitoylation promotes expression at tight junctions. Detected on round and elongated spermatids (at protein level). Highest expression in placenta, brain and kidney. Significant expression is detected on platelets. Expressed in intestinal mucosa cells. Expressed in the vascular endothelium. Found in serum (at protein level). Also detected in the synovial fluid of patients with rheumatoid arthritis, psoriatic arthritis or ostearthritis (at protein level).

It localises to the cell membrane. The protein resides in the cell junction. Its subcellular location is the desmosome. It is found in the tight junction. The protein localises to the secreted. Functionally, junctional adhesion protein that mediates heterotypic cell-cell interactions with its cognate receptor JAM2 to regulate different cellular processes. Plays a role in homing and mobilization of hematopoietic stem and progenitor cells within the bone marrow. At the surface of bone marrow stromal cells, it contributes to the retention of the hematopoietic stem and progenitor cells expressing JAM3. Plays a central role in leukocytes extravasation by facilitating transmigration through the endothelium. Plays a role in spermatogenesis where JAM2 and JAM3, which are respectively expressed by Sertoli and germ cells, mediate an interaction between both cell types and play an essential role in the anchorage of germ cells onto Sertoli cells and the assembly of cell polarity complexes during spermatid differentiation. Also functions as a counter-receptor for ITGAM, mediating leukocyte-platelet interactions and is involved in the regulation of transepithelial migration of polymorphonuclear neutrophils (PMN). Plays a role in angiogenesis. Plays a role in the regulation of cell migration. During myogenesis, it is involved in myocyte fusion. Its function is as follows. Promotes chemotaxis of vascular endothelial cells and stimulates angiogenesis. In Homo sapiens (Human), this protein is Junctional adhesion molecule C (JAM3).